Here is a 245-residue protein sequence, read N- to C-terminus: tRNA pseudouridine synthase A 2 (245 aa).

D53 acts as the Nucleophile in catalysis. Position 111 (Y111) interacts with substrate.

Belongs to the tRNA pseudouridine synthase TruA family. In terms of assembly, homodimer.

It catalyses the reaction uridine(38/39/40) in tRNA = pseudouridine(38/39/40) in tRNA. In terms of biological role, formation of pseudouridine at positions 38, 39 and 40 in the anticodon stem and loop of transfer RNAs. The polypeptide is tRNA pseudouridine synthase A 2 (Bacillus cereus (strain ZK / E33L)).